The following is a 643-amino-acid chain: Complement component C1q receptor (643 aa).

The first 23 residues, 1 to 23 (MVTSTGLLLLLGLLGQLWAGAAA), serve as a signal peptide directing secretion. Over 24-571 (DSEAVVCEGT…HSDSDTDGQK (548 aa)) the chain is Extracellular. The region spanning 31 to 173 (EGTACYTAHW…CGTPDAPGNS (143 aa)) is the C-type lectin domain. 16 cysteine pairs are disulfide-bonded: C140–C164, C261–C272, C268–C282, C284–C297, C303–C314, C308–C325, C327–C340, C346–C355, C351–C364, C366–C380, C386–C397, C393–C406, C408–C422, C428–C437, C433–C446, and C448–C461. 2 EGF-like domains span residues 257–298 (PKFG…VTCA) and 299–341 (SRNP…VHCV). The N-linked (GlcNAc...) asparagine glycan is linked to N322. The region spanning 342–381 (DIDECEDSPCDQECINTPGGFHCECWVGYQSSGSKEEACE) is the EGF-like 3; calcium-binding domain. One can recognise an EGF-like 4; calcium-binding domain in the interval 382-423 (DVDECTAAYSPCAQGCTNTDGSFYCSCKEGYIMSGEDSTQCE). The region spanning 424-462 (DIDECLGNPCDTLCINTDGSFRCGCPAGFELAPNGVSCT) is the EGF-like 5; calcium-binding domain. A disordered region spans residues 469–517 (ELPARPPQKEDKGDGKESTVPLTEMPGSLNGSKDVSNRAQTTDLSIQSD). The span at 475–485 (PQKEDKGDGKE) shows a compositional bias: basic and acidic residues. Polar residues predominate over residues 497–517 (LNGSKDVSNRAQTTDLSIQSD). N-linked (GlcNAc...) asparagine glycosylation is present at N498. The chain crosses the membrane as a helical span at residues 572 to 592 (LLLFYILGTVVAISLLLALAL). At 593-643 (GLLIYLKRKAKKEEIKEKKAQNAADSYSWIPERAESRAPENQYSPTPGTDC) the chain is on the cytoplasmic side. Residues 606–643 (EIKEKKAQNAADSYSWIPERAESRAPENQYSPTPGTDC) form a disordered region. S618 is subject to Phosphoserine. Phosphotyrosine is present on residues Y619 and Y635. Polar residues predominate over residues 631-643 (PENQYSPTPGTDC).

Homodimer. Interacts with C1QBP; the association may represent a cell surface C1q receptor. Interacts with surfactant protein A/SFTPA1. Interacts with multimerin-2/MMRN2. Interacts with DAG1; this interaction plays an important role in endothelial cell migration. Interacts with CBL. Interacts with IGFBP7. Interacts with VEGFR2. In terms of processing, N- and O-glycosylated. Post-translationally, phosphorylated on Tyr-619 and Tyr-635 by SRC; these phosphorylations promote endothelial cell adhesion and migration. Widely expressed. Highly expressed in lung and heart. Expressed at lower level in brain, thymus, liver, spleen, intestine, kidney, adrenal gland, muscle and testis. Expressed on endothelial cells, platelets, undifferentiated monocytes and circulating natural killer cells.

Its subcellular location is the cell membrane. Cell surface receptor that plays a role in various physiological processes including inflammation, phagocytosis, and cell adhesion. Plays a role in phagocytosis and enhances the uptake of apoptotic cells and immune complexes by acting as a receptor for defense collagens including surfactant protein A/SFTPA1, C1q, and mannose-binding lectin (MBL2). Plays a role in the regulation of endothelial cell function and adhesion by activating angiogenesis. Mechanistically, exerts its angiogenic function by associating with beta-dystroglycan, leading to SRC-dependent phosphorylation and subsequent recruitment of CBL. In turn, CBL provides a docking site for downstream signaling components, such as CRKL to enhance cell migration. Participates in angiogenesis also by acting as a receptor for the ECM pan-endothelial glycoprotein multimerin-2/MMRN2 and IGFBP7 ligands. Both ligands play a non-redundant role in CD93-mediated endothelial cell function. Acts as a key regulator of endothelial barrier function through modulating VEGFR2 function. In Rattus norvegicus (Rat), this protein is Complement component C1q receptor (Cd93).